A 441-amino-acid chain; its full sequence is Signal recognition particle 54 kDa protein (441 aa).

GTP contacts are provided by residues 104-111 (GLQGSGKT), 186-190 (DTAGR), and 244-247 (TKLD).

This sequence belongs to the GTP-binding SRP family. SRP54 subfamily. As to quaternary structure, part of the signal recognition particle protein translocation system, which is composed of SRP and FtsY. Archaeal SRP consists of a 7S RNA molecule of 300 nucleotides and two protein subunits: SRP54 and SRP19.

The protein resides in the cytoplasm. The enzyme catalyses GTP + H2O = GDP + phosphate + H(+). Functionally, involved in targeting and insertion of nascent membrane proteins into the cytoplasmic membrane. Binds to the hydrophobic signal sequence of the ribosome-nascent chain (RNC) as it emerges from the ribosomes. The SRP-RNC complex is then targeted to the cytoplasmic membrane where it interacts with the SRP receptor FtsY. The protein is Signal recognition particle 54 kDa protein of Staphylothermus marinus (strain ATCC 43588 / DSM 3639 / JCM 9404 / F1).